Reading from the N-terminus, the 50-residue chain is KFCEKPSGTWSGVCGNSGACKDQCIRLEGAKHGSCNYKLPAHRCICYYEC.

Disulfide bonds link C3/C50, C14/C35, C20/C44, and C24/C46.

Post-translationally, contains 4 disulfide bonds.

Its subcellular location is the secreted. Antimicrobial peptide active against fungi, Gram-positive and Gram-negative bacteria. Inhibits growth of hyphae in the fungi A.niger (IC(50)=3.5 ug/ml), B.sorokiniana (IC(50)=1.8 ug/ml), F.oxysporum (IC(50)=5.3 ug/ml), F.graminearum (IC(50)=6.9 ug/ml), F.culmorum (IC(50)=6.9 ug/ml) and B.cinerea (IC(50)=13.7 ug/ml). Has no effect on spore germination. Destroys spores in germinated conidia by disruption of cell walls and membranes in A.niger and B.sorokiniana. Causes vacuolization of germinated macro- and microconidia in F.oxysporum, F.graminearum and F.culmorum. Strongly inhibits growth of P.infestans on potato tubers above concentrations of 3.4 ug/ml. Inhibits growth of Gram-positive bacteria C.michiganensis and B.subtilis and of Gram-negative bacteria P.syringae, E.carotovora and E.coli. The chain is Defensin D2 from Nigella sativa (Black cumin).